We begin with the raw amino-acid sequence, 183 residues long: Transmembrane protein 52B (183 aa).

An N-terminal signal peptide occupies residues 1–24 (MGVRVHVVAASALLYFILLSGTRC). A helical transmembrane segment spans residues 40-60 (VHLWYIWLLVVIGALLLLCGL). The interval 158–183 (DLPPVPEEKQLPPTEKESTRIVDSWN) is disordered. Residues 163–177 (PEEKQLPPTEKESTR) show a composition bias toward basic and acidic residues.

Its subcellular location is the membrane. In Homo sapiens (Human), this protein is Transmembrane protein 52B (TMEM52B).